Consider the following 215-residue polypeptide: Thymidylate kinase (215 aa).

11-18 (GIDGAGKS) is a binding site for ATP.

It belongs to the thymidylate kinase family.

It carries out the reaction dTMP + ATP = dTDP + ADP. Phosphorylation of dTMP to form dTDP in both de novo and salvage pathways of dTTP synthesis. The sequence is that of Thymidylate kinase from Nitrosomonas europaea (strain ATCC 19718 / CIP 103999 / KCTC 2705 / NBRC 14298).